Here is a 459-residue protein sequence, read N- to C-terminus: Peptidyl-prolyl cis-trans isomerase FKBP4 (459 aa).

Met-1 carries the N-acetylmethionine; in peptidyl-prolyl cis-trans isomerase FKBP4; alternate modification. Residues 1–22 (MTAEETKAAESGAQSAPLRLEG) form a disordered region. Thr-2 carries the N-acetylthreonine; in peptidyl-prolyl cis-trans isomerase FKBP4, N-terminally processed; partial modification. The region spanning 50–138 (GDRVFVHYTG…VFEVELFEFK (89 aa)) is the PPIase FKBP-type 1 domain. Phosphothreonine is present on Thr-143. The PPIase FKBP-type 2 domain occupies 167-253 (GALVEVALEG…KYEIHLKSFE (87 aa)). Tyr-220 bears the Phosphotyrosine mark. The interval 267-400 (LEQSTIVKER…AQLVVCQQRI (134 aa)) is interaction with tubulin. TPR repeat units lie at residues 270–303 (STIV…LEYE), 319–352 (LASH…DSNN), and 354–386 (KGLF…YPSN). Position 282 is an N6-acetyllysine (Lys-282). Position 373 is an omega-N-methylarginine (Arg-373). The interval 423-459 (TKAKATVAAGDQPADAEMRDEPKNDVAGGQPQVEAEA) is disordered.

In terms of assembly, homodimer. Interacts with GLMN. Associates with HSP90AA1 and HSP70 in steroid hormone receptor complexes. Also interacts with peroxisomal phytanoyl-CoA alpha-hydroxylase (PHYH). Interacts with NR3C1 and dynein. Interacts with HSF1 in the HSP90 complex. Associates with tubulin. Interacts with MAPT/TAU. Interacts (via TPR domain) with S100A1, S100A2 and S100A6; the interaction is Ca(2+) dependent. Interaction with S100A1 and S100A2 (but not with S100A6) leads to inhibition of FKBP4-HSP90 interaction. Interacts with dynein; causes partially NR3C1 transport to the nucleus.

It localises to the cytoplasm. The protein resides in the cytosol. It is found in the mitochondrion. The protein localises to the nucleus. Its subcellular location is the cytoskeleton. It catalyses the reaction [protein]-peptidylproline (omega=180) = [protein]-peptidylproline (omega=0). Its activity is regulated as follows. Inhibited by FK506. In terms of biological role, immunophilin protein with PPIase and co-chaperone activities. Component of unligated steroid receptors heterocomplexes through interaction with heat-shock protein 90 (HSP90). May play a role in the intracellular trafficking of heterooligomeric forms of steroid hormone receptors between cytoplasm and nuclear compartments. The isomerase activity controls neuronal growth cones via regulation of TRPC1 channel opening. Also acts as a regulator of microtubule dynamics by inhibiting MAPT/TAU ability to promote microtubule assembly. May have a protective role against oxidative stress in mitochondria. The chain is Peptidyl-prolyl cis-trans isomerase FKBP4 (FKBP4) from Bos taurus (Bovine).